The following is a 181-amino-acid chain: Ribulose bisphosphate carboxylase small subunit 3B, chloroplastic (181 aa).

The transit peptide at 1–54 (MASSMLSSAAVVTSPAQATMVAPFTGLKSSAAFPVTRKTNKDITSIASNGGRVS) directs the protein to the chloroplast.

This sequence belongs to the RuBisCO small chain family. In terms of assembly, heterohexadecamer of 8 large and 8 small subunits.

It is found in the plastid. The protein localises to the chloroplast. Functionally, ruBisCO catalyzes two reactions: the carboxylation of D-ribulose 1,5-bisphosphate, the primary event in carbon dioxide fixation, as well as the oxidative fragmentation of the pentose substrate. Both reactions occur simultaneously and in competition at the same active site. Although the small subunit is not catalytic it is essential for maximal activity. In Arabidopsis thaliana (Mouse-ear cress), this protein is Ribulose bisphosphate carboxylase small subunit 3B, chloroplastic (RBCS-3B).